The primary structure comprises 371 residues: 2-oxoadipate dioxygenase/decarboxylase, chloroplastic (371 aa).

The transit peptide at 1–50 directs the protein to the chloroplast; that stretch reads MISLHSSAIKASLYGSFPSSLRSTLSVSFSAGSLIRLPSVGKRNLSVVVS. The 2-oxoadipate site is built by His113 and Arg117. His113 lines the Fe(2+) pocket. His250 serves as a coordination point for Fe(2+). 2-oxoadipate contacts are provided by Gln296 and Tyr320. Glu322 contacts Fe(2+).

This sequence belongs to the 2-oxoadipate dioxygenase/decarboxylase family. Fe(2+) is required as a cofactor.

It localises to the plastid. The protein localises to the chloroplast. The enzyme catalyses 2-oxoadipate + O2 = (R)-2-hydroxyglutarate + CO2. The protein operates within amino-acid degradation. Its function is as follows. Catalyzes the decarboxylation and hydroxylation of 2-oxoadipate (2OA) to form D-2-hydroxyglutarate (D-2-HGA). Is involved in a D-lysine catabolic pathway. The protein is 2-oxoadipate dioxygenase/decarboxylase, chloroplastic of Arabidopsis thaliana (Mouse-ear cress).